Reading from the N-terminus, the 178-residue chain is UPF0098 protein PYRAB11530 (178 aa).

Positions 1-22 (MRYLVPLLVFMVLGMGCLGGGG) are cleaved as a signal peptide.

It belongs to the UPF0098 family.

In Pyrococcus abyssi (strain GE5 / Orsay), this protein is UPF0098 protein PYRAB11530.